We begin with the raw amino-acid sequence, 125 residues long: Large ribosomal subunit protein bL12 (125 aa).

It belongs to the bacterial ribosomal protein bL12 family. In terms of assembly, homodimer. Part of the ribosomal stalk of the 50S ribosomal subunit. Forms a multimeric L10(L12)X complex, where L10 forms an elongated spine to which 2 to 4 L12 dimers bind in a sequential fashion. Binds GTP-bound translation factors.

Forms part of the ribosomal stalk which helps the ribosome interact with GTP-bound translation factors. Is thus essential for accurate translation. The polypeptide is Large ribosomal subunit protein bL12 (Delftia acidovorans (strain DSM 14801 / SPH-1)).